We begin with the raw amino-acid sequence, 372 residues long: Histidine protein methyltransferase 1 homolog (372 aa).

Disordered stretches follow at residues 30 to 55 and 68 to 103; these read SKEL…QFDL and NAAP…AKEH. Positions 39 to 49 are enriched in basic and acidic residues; the sequence is QKGEERDRKCS. The span at 70 to 87 shows a compositional bias: polar residues; that stretch reads APSQDTDSPLSAASSSRN. Residues serine 72 and serine 77 each carry the phosphoserine modification. A Tele-methylhistidine; by autocatalysis modification is found at histidine 154. S-adenosyl-L-methionine contacts are provided by residues 168–172, glycine 195, and 216–218; these read IWECT and QDY. The Nuclear localization signal motif lies at 247–253; it reads PDVKRCR. S-adenosyl-L-methionine contacts are provided by residues 268–270 and serine 293; that span reads GEW.

Belongs to the methyltransferase superfamily. METTL18 family. Interacts with GRWD1 and members of the heat shock protein 90 and 70 families; these proteins may possibly be methylation substrates for the enzyme. In terms of processing, monomethylated at His-154 through automethylation. Automethylation at His-154 positively regulates the methyltransferase activity toward RPL3. Probably methylated on other residues.

It is found in the cytoplasm. Its subcellular location is the cytosol. It localises to the nucleus. The protein resides in the nucleolus. The enzyme catalyses L-histidyl-[protein] + S-adenosyl-L-methionine = N(tele)-methyl-L-histidyl-[protein] + S-adenosyl-L-homocysteine + H(+). Protein-L-histidine N-tele-methyltransferase that specifically monomethylates RPL3, thereby regulating translation elongation. Histidine methylation of RPL3 regulates translation elongation by slowing ribosome traversal on tyrosine codons: slower elongation provides enough time for proper folding of synthesized proteins and prevents cellular aggregation of tyrosine-rich proteins. This is Histidine protein methyltransferase 1 homolog from Homo sapiens (Human).